Reading from the N-terminus, the 513-residue chain is ATP synthase subunit alpha (513 aa).

Residue 169-176 (GDRQTGKT) participates in ATP binding.

The protein belongs to the ATPase alpha/beta chains family. As to quaternary structure, F-type ATPases have 2 components, CF(1) - the catalytic core - and CF(0) - the membrane proton channel. CF(1) has five subunits: alpha(3), beta(3), gamma(1), delta(1), epsilon(1). CF(0) has three main subunits: a(1), b(2) and c(9-12). The alpha and beta chains form an alternating ring which encloses part of the gamma chain. CF(1) is attached to CF(0) by a central stalk formed by the gamma and epsilon chains, while a peripheral stalk is formed by the delta and b chains.

It localises to the cell inner membrane. The catalysed reaction is ATP + H2O + 4 H(+)(in) = ADP + phosphate + 5 H(+)(out). Produces ATP from ADP in the presence of a proton gradient across the membrane. The alpha chain is a regulatory subunit. This is ATP synthase subunit alpha from Shewanella baltica (strain OS223).